The following is a 555-amino-acid chain: Exodeoxyribonuclease 7 large subunit (555 aa).

This sequence belongs to the XseA family. As to quaternary structure, heterooligomer composed of large and small subunits.

It localises to the cytoplasm. The enzyme catalyses Exonucleolytic cleavage in either 5'- to 3'- or 3'- to 5'-direction to yield nucleoside 5'-phosphates.. In terms of biological role, bidirectionally degrades single-stranded DNA into large acid-insoluble oligonucleotides, which are then degraded further into small acid-soluble oligonucleotides. The sequence is that of Exodeoxyribonuclease 7 large subunit from Chlamydia felis (strain Fe/C-56) (Chlamydophila felis).